The chain runs to 85 residues: Putative membrane protein insertion efficiency factor (85 aa).

The protein belongs to the UPF0161 family.

It is found in the cell inner membrane. In terms of biological role, could be involved in insertion of integral membrane proteins into the membrane. The chain is Putative membrane protein insertion efficiency factor from Dictyoglomus thermophilum (strain ATCC 35947 / DSM 3960 / H-6-12).